Consider the following 622-residue polypeptide: MRRAVSKILPTPKLFNDSAHFHSNFRLEYNSVDDFYVQLDNPHKVWLPGEEISGQVVLISKKNLANIVITLSLVGFIKINASSHSKLRPLKHTLFDYTIKIYGKDEEEQTDSAEFSNGLLKGEHVFPFIVKLPNKRVYTSIDFGKGSINYILKAAIGNSSSYVIPASPDNASTSSLTKKKILQNPSHTSEKVISLVNPIDVSLLPRPKPKRLILKDPRTSSNKKLSRTQTSTSTINTMSSNEHDHSLPEGATPEDSDHKSLKSIPVPTIKAILEVPQRGYLRGESIPIKLSINHLRKIQDFNGIIITFVRVCRLDNGPDGVVESFRKDLQQLILPLYVDPVTFQSEINSSLRVPADAFPTILGCPLVSFQYFVEVLINLSGKSIALDSDVDARAKANPQATKSSSDKFKFNFDSTQTERSTYINTDSYKRSKKFLQLTTEIYIGTHRSSTQEEQAPQAEEVASRRSSSMASNSNSSPAVFSTSSPHSPVEHQYAGAINSIPESVAVSNFTPPYENVVPSYVPPEFVSHLQNQSELSEKERMRQHESSLLPSAPPDDEQPSPVNMTSNQQPFSFFTYQNTNTSPPVPLDDDLYQEPVDSAPNYLNVNNDRLIVPQDNNSNSET.

3 disordered regions span residues 210-261 (KRLI…HKSL), 445-489 (THRS…HSPV), and 529-622 (LQNQ…NSET). 2 stretches are compositionally biased toward low complexity: residues 227-240 (RTQTSTSTINTMSS) and 451-476 (QEEQAPQAEEVASRRSSSMASNSNSS). Residues 477–486 (PAVFSTSSPH) are compositionally biased toward polar residues. Residues 535 to 545 (LSEKERMRQHE) are compositionally biased toward basic and acidic residues. A compositionally biased stretch (polar residues) spans 560 to 582 (SPVNMTSNQQPFSFFTYQNTNTS).

The protein belongs to the arrestin family. PalF/RIM8 subfamily.

In terms of biological role, required for the proteolytic cleavage of the transcription factor RIM101 in response to alkaline ambient pH. Required for hyphal development. This Candida albicans (strain SC5314 / ATCC MYA-2876) (Yeast) protein is pH-response regulator protein palF/RIM8 (RIM8).